Here is a 90-residue protein sequence, read N- to C-terminus: Small ribosomal subunit protein bS16 (90 aa).

The protein belongs to the bacterial ribosomal protein bS16 family.

The sequence is that of Small ribosomal subunit protein bS16 from Clostridioides difficile (strain 630) (Peptoclostridium difficile).